The chain runs to 328 residues: 2-oxoglutarate-dependent dioxygenase gloE (328 aa).

In terms of domain architecture, Fe2OG dioxygenase spans 170 to 271 (TRTNLTFLKY…RYTLAYFLRP (102 aa)). Fe cation contacts are provided by H194, D196, and H249. A 2-oxoglutarate-binding site is contributed by R262.

The protein belongs to the iron/ascorbate-dependent oxidoreductase family. Fe(2+) serves as cofactor.

Its pathway is mycotoxin biosynthesis. Its function is as follows. 2-oxoglutarate-dependent dioxygenase; part of the gene cluster that mediates the biosynthesis of pneumocandins, lipohexapeptides of the echinocandin family that prevent fungal cell wall formation by non-competitive inhibition of beta-1,3-glucan synthase. The 10,12-dimethylmyristoyl side chain is synthesized by the reducing polyketide synthase gloL/GLPKS4. The thioesterase gloN/GLHYD exclusively interacts with gloL/GLPKS4 to maintain turnover of the polyketide side chain. The 10R,12S-dimethylmyristic acid is then transferred to the first thiolation domain of the nonribosomal peptide synthetase gloA/GLNRPS4 by the acyl-AMP ligase gloD/GLligase, followed by its acylation to L-ornithine to trigger elongation of the cyclic hexapeptide. L-ornithine, 4R-hydroxyl-L-proline (generated from L-proline by the dioxygenase gloF/GLOXY2), 3S-hydroxyl-L-homotyrosine (generated by gloG/GLHtyB, gloH/GLHtyA, gloI/GLHtyC, gloJ/GLHtyD and hydroxylated at C-3 by the dioxygenase gloM/GLOXY1), 3R-hydroxyl-L-glutamine (generated from L-glutamine probably by the dioxygenase gloE/GLOXY3) and 3S-hydroxyl-L-proline (generated from L-proline by the dioxygenase gloF/GLOXY2 to yield pneumocandin B0), or 3S-hydroxyl-4S-methyl-L-proline (generated from L-leucine by the dioxygenase gloC/GLOXY4 to yield pneumocandin A0) are sequentially added to the growing chain. The last C domain of gloA/GLNRPS4 is proposed to be responsible for cyclization by condensation to form the peptide bond between L-ornithine and 3S-hydroxyl-4S-methyl-L-proline (for pneumocandin A0) or 3S-hydroxyl-L-proline (for pneumocandin B0). Finally, the subsequent C-4 hydroxylation of 3S-hydroxyl-L-homotyrosine and L-ornithine dihydroxylation at C-4 and C-5 are performed by the cytochrome P450 monooxygenases gloP/GLP450-1 and gloO/GLP450-2, respectively. This is 2-oxoglutarate-dependent dioxygenase gloE from Glarea lozoyensis (strain ATCC 20868 / MF5171).